Reading from the N-terminus, the 223-residue chain is Probable amino-acid ABC transporter permease protein PatM (223 aa).

The region spanning 19–210 is the ABC transmembrane type-1 domain; sequence LGTTMEMATW…GVVVILTRVQ (192 aa). Helical transmembrane passes span 23–43, 59–78, 90–110, 156–176, and 186–206; these read MEMA…LANI, ISFF…YYGL, AFSA…AESI, FIDM…EIMA, and FRFF…VVIL.

This sequence belongs to the binding-protein-dependent transport system permease family. HisMQ subfamily.

It is found in the cell inner membrane. In terms of biological role, probably part of a binding-protein-dependent transport system for an amino acid. Probably responsible for the translocation of the substrate across the membrane. The sequence is that of Probable amino-acid ABC transporter permease protein PatM (patM) from Vibrio harveyi (Beneckea harveyi).